The following is a 393-amino-acid chain: Pyridoxamine--pyruvate transaminase (393 aa).

Pyridoxal 5'-phosphate-binding residues include glutamate 68, tyrosine 95, and threonine 146. Lysine 197 is subject to N6-(pyridoxal phosphate)lysine. Residue arginine 345 participates in pyridoxal 5'-phosphate binding.

It belongs to the class-V pyridoxal-phosphate-dependent aminotransferase family. Homotetramer. Pyridoxal 5'-phosphate is required as a cofactor.

It catalyses the reaction pyridoxamine + pyruvate = pyridoxal + L-alanine. Its function is as follows. Catalyzes a reversible transamination reaction between pyridoxamine and pyruvate to form pyridoxal and L-alanine. The chain is Pyridoxamine--pyruvate transaminase (ppaT) from Mesorhizobium japonicum (strain LMG 29417 / CECT 9101 / MAFF 303099) (Mesorhizobium loti (strain MAFF 303099)).